Consider the following 190-residue polypeptide: Cytoplasmic envelopment protein 3 (190 aa).

Glycine 2 is lipidated: N-myristoyl glycine; by host. The segment at 27-190 is disordered; the sequence is RQVSLRSYDN…TKKPAASLPF (164 aa). The span at 30 to 43 shows a compositional bias: polar residues; the sequence is SLRSYDNIPPTSSS. The segment covering 44 to 58 has biased composition (acidic residues); it reads DEGEDDDDGEDDDNE. The span at 80–90 shows a compositional bias: basic and acidic residues; it reads SHREATHDGSK. The segment covering 108–123 has biased composition (basic residues); the sequence is KQSKKKKKPSKHHHHQ. A compositionally biased stretch (acidic residues) spans 130–139; that stretch reads ETDDLDEEDT.

It belongs to the herpesviridae cytoplasmic envelopment protein 3 family. As to quaternary structure, interacts with cytoplasmic envelopment protein 2; this interaction is essential for the proper localization of each protein to the assembly complex and thus for the production of infectious virus. Myristoylation and palmitoylation (probably on one or more of the nearby cysteines at the N-terminus) enable membrane-binding and Golgi apparatus-specific targeting and are essential for efficient packaging. In terms of processing, phosphorylated. Phosphorylation does not seem to be required for recycling to the host Golgi apparatus. Packaging is selective for underphosphorylated forms.

Its subcellular location is the virion tegument. It localises to the virion membrane. The protein resides in the host cell membrane. It is found in the host Golgi apparatus membrane. In terms of biological role, plays an important role in the cytoplasmic envelopment of tegument proteins and capsids during the assembly and egress processes. Also participates in viral entry at the fusion step probably by regulating the core fusion machinery. The chain is Cytoplasmic envelopment protein 3 (UL99) from Human cytomegalovirus (strain AD169) (HHV-5).